A 374-amino-acid polypeptide reads, in one-letter code: UDP-N-acetylglucosamine--N-acetylmuramyl-(pentapeptide) pyrophosphoryl-undecaprenol N-acetylglucosamine transferase (374 aa).

UDP-N-acetyl-alpha-D-glucosamine contacts are provided by residues 10-12 (TGG), Asn-124, Arg-166, Ser-196, and Gln-294.

Belongs to the glycosyltransferase 28 family. MurG subfamily.

It localises to the cell membrane. The catalysed reaction is di-trans,octa-cis-undecaprenyl diphospho-N-acetyl-alpha-D-muramoyl-L-alanyl-D-glutamyl-meso-2,6-diaminopimeloyl-D-alanyl-D-alanine + UDP-N-acetyl-alpha-D-glucosamine = di-trans,octa-cis-undecaprenyl diphospho-[N-acetyl-alpha-D-glucosaminyl-(1-&gt;4)]-N-acetyl-alpha-D-muramoyl-L-alanyl-D-glutamyl-meso-2,6-diaminopimeloyl-D-alanyl-D-alanine + UDP + H(+). It functions in the pathway cell wall biogenesis; peptidoglycan biosynthesis. Its function is as follows. Cell wall formation. Catalyzes the transfer of a GlcNAc subunit on undecaprenyl-pyrophosphoryl-MurNAc-pentapeptide (lipid intermediate I) to form undecaprenyl-pyrophosphoryl-MurNAc-(pentapeptide)GlcNAc (lipid intermediate II). The chain is UDP-N-acetylglucosamine--N-acetylmuramyl-(pentapeptide) pyrophosphoryl-undecaprenol N-acetylglucosamine transferase from Symbiobacterium thermophilum (strain DSM 24528 / JCM 14929 / IAM 14863 / T).